A 318-amino-acid chain; its full sequence is uncharacterized protein (318 aa).

This is an uncharacterized protein from Ostreid herpesvirus 1 (isolate France) (OsHV-1).